Here is a 375-residue protein sequence, read N- to C-terminus: Chaperone protein DnaJ (375 aa).

Residues 5–70 (DYYDVLGVNR…QKRGAYDQFG (66 aa)) enclose the J domain. Residues 135 to 213 (GCEKQIRIPS…CHGAGQKKTT (79 aa)) form a CR-type zinc finger. Zn(2+) contacts are provided by Cys148, Cys151, Cys165, Cys168, Cys187, Cys190, Cys201, and Cys204. CXXCXGXG motif repeat units lie at residues 148–155 (CSTCNGTG), 165–172 (CATCGGHG), 187–194 (CPTCHGTG), and 201–208 (CGSCHGAG).

It belongs to the DnaJ family. Homodimer. The cofactor is Zn(2+).

It localises to the cytoplasm. In terms of biological role, participates actively in the response to hyperosmotic and heat shock by preventing the aggregation of stress-denatured proteins and by disaggregating proteins, also in an autonomous, DnaK-independent fashion. Unfolded proteins bind initially to DnaJ; upon interaction with the DnaJ-bound protein, DnaK hydrolyzes its bound ATP, resulting in the formation of a stable complex. GrpE releases ADP from DnaK; ATP binding to DnaK triggers the release of the substrate protein, thus completing the reaction cycle. Several rounds of ATP-dependent interactions between DnaJ, DnaK and GrpE are required for fully efficient folding. Also involved, together with DnaK and GrpE, in the DNA replication of plasmids through activation of initiation proteins. The protein is Chaperone protein DnaJ of Chromobacterium violaceum (strain ATCC 12472 / DSM 30191 / JCM 1249 / CCUG 213 / NBRC 12614 / NCIMB 9131 / NCTC 9757 / MK).